A 240-amino-acid polypeptide reads, in one-letter code: Uridylate kinase (240 aa).

ATP is bound at residue 13-16; it reads KFSG. Glycine 55 is a binding site for UMP. ATP-binding residues include glycine 56 and arginine 60. UMP is bound by residues aspartate 76 and 137 to 144; that span reads TGNPFFTT. ATP-binding residues include threonine 164, tyrosine 170, and aspartate 173.

It belongs to the UMP kinase family. As to quaternary structure, homohexamer.

The protein localises to the cytoplasm. The catalysed reaction is UMP + ATP = UDP + ADP. The protein operates within pyrimidine metabolism; CTP biosynthesis via de novo pathway; UDP from UMP (UMPK route): step 1/1. Inhibited by UTP. Catalyzes the reversible phosphorylation of UMP to UDP. This Helicobacter pylori (strain HPAG1) protein is Uridylate kinase.